Here is a 577-residue protein sequence, read N- to C-terminus: MKQSKVLIPTKKEAPSDAEALSHKMMIRAGYIYQVSAGVWSYLPLAYRVIRKVENIIRDEMDKAGAVEMLMPGLLPADLWKESGRYESYGDNLFKLKDRRDRDFILGPTHEETFTEVLRDSIKSYKKLPLVVYQLQDKFRDEDRPRYGILRGKEFEMLDGYSFSADQEGLDEAYNNQAKAYRNIFDRIGLNYKVILADSGTMGGKNSQEFSAPAEVGEDIIAYTDGDYAANIEKAESKFTGVQQTAVPAPIEKKATPGAHTVYEAAESLDLDPNQVIKSMLYIAKMSEDEYQPVLVLMRGDDEVNEAKVINALDCEELELATEEDAEKYLNAHPGSLGPVGVGEEVKILADNYVKVLVNMACGANEDGYHYVNANIDRDFRVDQFGDFRNVKEGEIAPDGQPLKFTPGIEIGHIFKLGTHYSSKLGAQVLDSNGRLTDVIMGSYGIGVTRLLSAVAEQNADENGLVWPDSIAPFDVHVIPVNAKKEDQMAMADKIDQQLTEAGYEVLVDDRKERAGVKFADSDLIGIPIRVTVGKKAQDGIVEIKIRKTGETVEVKQEELVNTVGILLKQLNEEKNK.

This sequence belongs to the class-II aminoacyl-tRNA synthetase family. ProS type 1 subfamily. In terms of assembly, homodimer.

Its subcellular location is the cytoplasm. It carries out the reaction tRNA(Pro) + L-proline + ATP = L-prolyl-tRNA(Pro) + AMP + diphosphate. In terms of biological role, catalyzes the attachment of proline to tRNA(Pro) in a two-step reaction: proline is first activated by ATP to form Pro-AMP and then transferred to the acceptor end of tRNA(Pro). As ProRS can inadvertently accommodate and process non-cognate amino acids such as alanine and cysteine, to avoid such errors it has two additional distinct editing activities against alanine. One activity is designated as 'pretransfer' editing and involves the tRNA(Pro)-independent hydrolysis of activated Ala-AMP. The other activity is designated 'posttransfer' editing and involves deacylation of mischarged Ala-tRNA(Pro). The misacylated Cys-tRNA(Pro) is not edited by ProRS. This chain is Proline--tRNA ligase, found in Limosilactobacillus reuteri (strain DSM 20016) (Lactobacillus reuteri).